The primary structure comprises 311 residues: Pyrimidine-specific ribonucleoside hydrolase RihA (311 aa).

Residue His-240 is part of the active site.

This sequence belongs to the IUNH family. RihA subfamily.

Hydrolyzes cytidine or uridine to ribose and cytosine or uracil, respectively. The protein is Pyrimidine-specific ribonucleoside hydrolase RihA of Salmonella enteritidis PT4 (strain P125109).